We begin with the raw amino-acid sequence, 301 residues long: HTH-type transcriptional activator NagR (301 aa).

The region spanning 6–63 is the HTH lysR-type domain; sequence IDLNLLVVFNQLLLDRSVSTAGEKLGLTQPAVSNSLKRLRAALKDDLFLRTSKGMEPT. The H-T-H motif DNA-binding region spans 23–42; that stretch reads VSTAGEKLGLTQPAVSNSLK.

It belongs to the LysR transcriptional regulatory family.

Its function is as follows. May regulate the expression of the naphthalene (nagA-F) and salicylate (nagG-M) metabolism genes. This chain is HTH-type transcriptional activator NagR, found in Ralstonia sp.